We begin with the raw amino-acid sequence, 696 residues long: PWWP domain-containing DNA repair factor 3B (696 aa).

Polar residues-rich tracts occupy residues 119–128 (QNVPQKQSDS) and 290–300 (CLDTSQNQPSM). Disordered stretches follow at residues 119–143 (QNVP…DLPG) and 278–303 (NIED…MESE). Position 128 is a phosphoserine (Ser128). The PWWP domain occupies 392 to 453 (TGMIVWFKYQ…KKFDCKEKQM (62 aa)).

The protein belongs to the PWWP3A family.

This chain is PWWP domain-containing DNA repair factor 3B, found in Homo sapiens (Human).